Reading from the N-terminus, the 455-residue chain is Kynurenine--oxoglutarate transaminase 3 (455 aa).

G72 is a binding site for substrate. Position 117 is an N6-acetyllysine; alternate (K117). Position 117 is an N6-succinyllysine; alternate (K117). Residue N219 coordinates substrate. Residue K281 is modified to N6-(pyridoxal phosphate)lysine. R430 lines the substrate pocket.

It belongs to the class-I pyridoxal-phosphate-dependent aminotransferase family. As to quaternary structure, homodimer. Pyridoxal 5'-phosphate serves as cofactor. Widely expressed, with higher expression levels in liver, kidney, heart and neuroendocrine tissues.

It catalyses the reaction L-kynurenine + 2-oxoglutarate = kynurenate + L-glutamate + H2O. It carries out the reaction L-kynurenine + glyoxylate = kynurenate + glycine + H2O. The enzyme catalyses 3-hydroxy-L-kynurenine + glyoxylate = xanthurenate + glycine + H2O. The catalysed reaction is an S-substituted L-cysteine + H2O = a thiol + pyruvate + NH4(+). The protein operates within amino-acid degradation; L-kynurenine degradation; kynurenate from L-kynurenine: step 1/2. Kynurenine transamination is competitively inhibited by cysteine, glutamine, histidine, methionine, leucine, or phenylalanine. Catalyzes the irreversible transamination of the L-tryptophan metabolite L-kynurenine to form kynurenic acid (KA), an intermediate in the tryptophan catabolic pathway which is also a broad spectrum antagonist of the three ionotropic excitatory amino acid receptors among others. May catalyze the beta-elimination of S-conjugates and Se-conjugates of L-(seleno)cysteine, resulting in the cleavage of the C-S or C-Se bond. Has transaminase activity towards L-kynurenine, tryptophan, phenylalanine, serine, cysteine, methionine, histidine, glutamine and asparagine with glyoxylate as an amino group acceptor (in vitro). Has lower activity with 2-oxoglutarate as amino group acceptor (in vitro). The chain is Kynurenine--oxoglutarate transaminase 3 (Kyat3) from Mus musculus (Mouse).